A 118-amino-acid polypeptide reads, in one-letter code: UPF0102 protein Franean1_1156 (118 aa).

Belongs to the UPF0102 family.

This is UPF0102 protein Franean1_1156 from Parafrankia sp. (strain EAN1pec).